Consider the following 568-residue polypeptide: Probable pectinesterase/pectinesterase inhibitor 23 (568 aa).

A signal peptide spans 1–33 (MGSDGDKKKKFIVAGSVSGFLVIMVVSVAVVTS). The interval 45-198 (RKTTKAVQAV…RELSSNSLAM (154 aa)) is pectinesterase inhibitor 23. N-linked (GlcNAc...) asparagine glycans are attached at residues Asn94, Asn210, and Asn316. The pectinesterase 23 stretch occupies residues 251–548 (PGPVKANAVV…PQDALLYTGD (298 aa)). Substrate contacts are provided by Thr333 and Gln363. The Proton donor; for pectinesterase activity role is filled by Asp386. Cys400 and Cys420 are joined by a disulfide. Asp407 acts as the Nucleophile; for pectinesterase activity in catalysis. Positions 475 and 477 each coordinate substrate.

It in the N-terminal section; belongs to the PMEI family. The protein in the C-terminal section; belongs to the pectinesterase family. In terms of tissue distribution, expressed in mature pollen grains in the anthers and on the stigma. Found in pollen tubes within the style.

The protein resides in the secreted. Its subcellular location is the cell wall. The catalysed reaction is [(1-&gt;4)-alpha-D-galacturonosyl methyl ester](n) + n H2O = [(1-&gt;4)-alpha-D-galacturonosyl](n) + n methanol + n H(+). The protein operates within glycan metabolism; pectin degradation; 2-dehydro-3-deoxy-D-gluconate from pectin: step 1/5. Acts in the modification of cell walls via demethylesterification of cell wall pectin. The polypeptide is Probable pectinesterase/pectinesterase inhibitor 23 (PME23) (Arabidopsis thaliana (Mouse-ear cress)).